Reading from the N-terminus, the 200-residue chain is Large ribosomal subunit protein uL4 (200 aa).

The tract at residues 42–69 (SKAQKNRSDVSGGGRKPWRQKGTGRARA) is disordered.

Belongs to the universal ribosomal protein uL4 family. In terms of assembly, part of the 50S ribosomal subunit.

Functionally, one of the primary rRNA binding proteins, this protein initially binds near the 5'-end of the 23S rRNA. It is important during the early stages of 50S assembly. It makes multiple contacts with different domains of the 23S rRNA in the assembled 50S subunit and ribosome. In terms of biological role, forms part of the polypeptide exit tunnel. The sequence is that of Large ribosomal subunit protein uL4 from Alcanivorax borkumensis (strain ATCC 700651 / DSM 11573 / NCIMB 13689 / SK2).